The following is a 188-amino-acid chain: Peptide deformylase (188 aa).

The interval Ala70–Glu90 is disordered. Fe cation contacts are provided by Cys113 and His155. The active site involves Glu156. His159 serves as a coordination point for Fe cation.

It belongs to the polypeptide deformylase family. Requires Fe(2+) as cofactor.

The catalysed reaction is N-terminal N-formyl-L-methionyl-[peptide] + H2O = N-terminal L-methionyl-[peptide] + formate. Functionally, removes the formyl group from the N-terminal Met of newly synthesized proteins. Requires at least a dipeptide for an efficient rate of reaction. N-terminal L-methionine is a prerequisite for activity but the enzyme has broad specificity at other positions. This is Peptide deformylase from Novosphingobium aromaticivorans (strain ATCC 700278 / DSM 12444 / CCUG 56034 / CIP 105152 / NBRC 16084 / F199).